A 283-amino-acid chain; its full sequence is Pantothenate synthetase (283 aa).

ATP is bound at residue 26-33 (MGNLHAGH). Residue His-33 is the Proton donor of the active site. Gln-57 serves as a coordination point for (R)-pantoate. Beta-alanine is bound at residue Gln-57. Position 144–147 (144–147 (GRKD)) interacts with ATP. Position 150 (Gln-150) interacts with (R)-pantoate. ATP contacts are provided by residues Leu-173 and 181 to 184 (MSSR).

Belongs to the pantothenate synthetase family. In terms of assembly, homodimer.

The protein resides in the cytoplasm. The enzyme catalyses (R)-pantoate + beta-alanine + ATP = (R)-pantothenate + AMP + diphosphate + H(+). It participates in cofactor biosynthesis; (R)-pantothenate biosynthesis; (R)-pantothenate from (R)-pantoate and beta-alanine: step 1/1. Functionally, catalyzes the condensation of pantoate with beta-alanine in an ATP-dependent reaction via a pantoyl-adenylate intermediate. The polypeptide is Pantothenate synthetase (Thiobacillus denitrificans (strain ATCC 25259 / T1)).